The chain runs to 622 residues: Meiotic expression up-regulated protein 25 (622 aa).

The protein is Meiotic expression up-regulated protein 25 (meu25) of Schizosaccharomyces pombe (strain 972 / ATCC 24843) (Fission yeast).